Reading from the N-terminus, the 417-residue chain is Serine hydroxymethyltransferase (417 aa).

(6S)-5,6,7,8-tetrahydrofolate-binding positions include L121 and 125–127 (GHL). At K229 the chain carries N6-(pyridoxal phosphate)lysine. (6S)-5,6,7,8-tetrahydrofolate is bound at residue 355–357 (SPF).

This sequence belongs to the SHMT family. Homodimer. Requires pyridoxal 5'-phosphate as cofactor.

Its subcellular location is the cytoplasm. The catalysed reaction is (6R)-5,10-methylene-5,6,7,8-tetrahydrofolate + glycine + H2O = (6S)-5,6,7,8-tetrahydrofolate + L-serine. The protein operates within one-carbon metabolism; tetrahydrofolate interconversion. It functions in the pathway amino-acid biosynthesis; glycine biosynthesis; glycine from L-serine: step 1/1. Its function is as follows. Catalyzes the reversible interconversion of serine and glycine with tetrahydrofolate (THF) serving as the one-carbon carrier. This reaction serves as the major source of one-carbon groups required for the biosynthesis of purines, thymidylate, methionine, and other important biomolecules. Also exhibits THF-independent aldolase activity toward beta-hydroxyamino acids, producing glycine and aldehydes, via a retro-aldol mechanism. In Yersinia enterocolitica serotype O:8 / biotype 1B (strain NCTC 13174 / 8081), this protein is Serine hydroxymethyltransferase.